We begin with the raw amino-acid sequence, 847 residues long: DNA mismatch repair protein MutS (847 aa).

602–609 (GPNMSGKS) contacts ATP. The segment at 788-807 (EKREASLPASRTDSQKVSEQ) is disordered. Residues 796–807 (ASRTDSQKVSEQ) show a composition bias toward polar residues.

This sequence belongs to the DNA mismatch repair MutS family.

Its function is as follows. This protein is involved in the repair of mismatches in DNA. It is possible that it carries out the mismatch recognition step. This protein has a weak ATPase activity. In Streptococcus gordonii (strain Challis / ATCC 35105 / BCRC 15272 / CH1 / DL1 / V288), this protein is DNA mismatch repair protein MutS.